A 156-amino-acid polypeptide reads, in one-letter code: Xanthocillin biosynthesis cluster protein D (156 aa).

Asparagine 107 and asparagine 120 each carry an N-linked (GlcNAc...) asparagine glycan. Residues 131–153 (IHLNAIALVATVWYGFTLSSSLL) form a helical membrane-spanning segment.

Its subcellular location is the membrane. The protein operates within secondary metabolite biosynthesis. Functionally, part of the gene cluster that mediates the biosynthesis of the isocyanide xanthocillin and its derivatives. The first step of the pathway consists in the conversion of tyrosine into a vinyl-isonitrile intermediate by the isocyanide synthase xanB. Subsequent oxidative dimerization of this intermediate to form xanthocillin may involve the cytochrome P450 monooxygenase xanG, whose expression is coregulated with that of XanB. Xanthocillin can be further modified by the isonitrile hydratase-like protein xanA which introduces N-formyl groups and the methyltransferase xanE which introduces methyl groups, leading to the production of several derivatives including fumiformamide. Finally, fumiformamide can be subject to both oxidative and reductive cyclization to yield melanocins E and F, respectively. The protein is Xanthocillin biosynthesis cluster protein D of Aspergillus fumigatus (strain ATCC MYA-4609 / CBS 101355 / FGSC A1100 / Af293) (Neosartorya fumigata).